A 644-amino-acid chain; its full sequence is Uromodulin (644 aa).

Residues 1 to 26 (MGQLLSLTWLLLVMVVTPWFTVAGAN) form the signal peptide. Residues 30–66 (EARRCSECHDNATCVLDGVVTTCSCQAGFTGDGLVCE) enclose the EGF-like 1 domain. 21 cysteine pairs are disulfide-bonded: Cys-34–Cys-43, Cys-37–Cys-52, Cys-54–Cys-65, Cys-71–Cys-84, Cys-79–Cys-93, Cys-95–Cys-107, Cys-113–Cys-127, Cys-121–Cys-136, Cys-138–Cys-149, Cys-151–Cys-162, Cys-156–Cys-173, Cys-177–Cys-270, Cys-198–Cys-285, Cys-220–Cys-258, Cys-226–Cys-290, Cys-251–Cys-259, Cys-300–Cys-309, Cys-303–Cys-318, Cys-320–Cys-350, Cys-338–Cys-428, and Cys-369–Cys-392. N-linked (GlcNAc...) asparagine glycosylation occurs at Asn-40. The EGF-like 2; calcium-binding domain maps to 67 to 108 (DIDECATPWTHNCSNSICMNTLGSYECSCQDGFRLTPGLGCI). Residue Asn-78 is glycosylated (N-linked (GlcNAc...) asparagine). The EGF-like 3; calcium-binding domain maps to 109–150 (DVNECTEQGLSNCHSLATCVNTEGSYSCVCPKGYRGDGWYCE). The beta hairpin stretch occupies residues 151 to 174 (CSPGFCEPGLDCLPQGPSGKLVCQ). A D10C region spans residues 175–294 (DPCNVYETLT…CNLAYCTDPS (120 aa)). Residue Asn-235 is glycosylated (N-linked (GlcNAc...) asparagine). A glycan (N-linked (GlcNAc...) asparagine) is linked at Asn-278. The region spanning 295 to 326 (SVEGTCEECGVDEDCVSDNGRWRCQCKQDFNV) is the EGF-like 4 domain. Residue Asn-325 is glycosylated (N-linked (GlcNAc...) asparagine). The interval 337–432 (ECEANEIKIS…RINFECSYPL (96 aa)) is ZP-N. A ZP domain is found at 337 to 592 (ECEANEIKIS…PTCSGTRYRS (256 aa)). N-linked (GlcNAc...) asparagine glycosylation is found at Asn-399 and Asn-450. Positions 433-456 (DMKVSLKTSLQPMVSALNISLGGT) are flexible ZP-N/ZP-C linker; important for secretion and polymerization into filaments. Residues 457-467 (GKFTVQMALFQ) form an internal hydrophobic patch (IHP) region. The tract at residues 457-592 (GKFTVQMALF…PTCSGTRYRS (136 aa)) is ZP-C. Disulfide bonds link Cys-509/Cys-569, Cys-530/Cys-585, and Cys-574/Cys-581. Residue Asn-516 is glycosylated (N-linked (GlcNAc...) asparagine). The interval 589–592 (RYRS) is essential for cleavage by HPN. The segment at 601–609 (VLNLGPITR) is external hydrophobic patch (EHP); regulates polymerization into filaments. Ser-615 carries GPI-anchor amidated serine lipidation. The propeptide at 616–644 (VSKAASSNLGFLSIWLLLFLSATLTLMVH) is removed in mature form.

Homodimer that then polymerizes into long filaments. The filaments can additionally assemble laterally to form a sheet. The filaments consist of a zigzag-shaped backbone with laterally protruding arms which interact with bacterial adhesin fimH. Two fimH molecules can bind to a single UMOD monomer. In terms of processing, N-glycosylated. Post-translationally, proteolytically cleaved at a conserved C-terminal proteolytic cleavage site to generate the secreted form found in urine. This cleavage is catalyzed by HPN. In terms of tissue distribution, expression restricted to the thick ascending limb of the loop of Henle (TALH).

It localises to the apical cell membrane. Its subcellular location is the basolateral cell membrane. The protein resides in the cell projection. It is found in the cilium membrane. The protein localises to the secreted. Functionally, functions in biogenesis and organization of the apical membrane of epithelial cells of the thick ascending limb of Henle's loop (TALH), where it promotes formation of complex filamentous gel-like structure that may play a role in the water barrier permeability. May serve as a receptor for binding and endocytosis of cytokines (IL-1, IL-2) and TNF. Facilitates neutrophil migration across renal epithelia. In the urine, may contribute to colloid osmotic pressure, retards passage of positively charged electrolytes, and inhibits formation of liquid containing supersaturated salts and subsequent formation of salt crystals. Protects against urinary tract infections by binding to type 1 fimbriated E.coli. Binds to bacterial adhesin fimH which mediates the stable formation of bacterial aggregates, prevents the binding of E.coli to uroplakins UPK1A and UPK1B which act as urothelial receptors for type I fimbriae, and allows for pathogen clearance through micturation. Also promotes aggregation of other bacteria including K.pneumoniae, P.aeruginosa and S.mitis and so may also protect against other uropathogens. The polypeptide is Uromodulin (Umod) (Rattus norvegicus (Rat)).